Reading from the N-terminus, the 931-residue chain is Phosphoenolpyruvate carboxylase (931 aa).

Residues His-138 and Lys-594 contribute to the active site.

The protein belongs to the PEPCase type 1 family. The cofactor is Mg(2+).

The catalysed reaction is oxaloacetate + phosphate = phosphoenolpyruvate + hydrogencarbonate. Forms oxaloacetate, a four-carbon dicarboxylic acid source for the tricarboxylic acid cycle. The sequence is that of Phosphoenolpyruvate carboxylase from Streptococcus agalactiae serotype Ia (strain ATCC 27591 / A909 / CDC SS700).